A 296-amino-acid chain; its full sequence is Ribonuclease HIII (296 aa).

Residues 80–296 enclose the RNase H type-2 domain; sequence LALIGSDEVG…NTKKAYQRLK (217 aa). 3 residues coordinate a divalent metal cation: D86, E87, and D191.

This sequence belongs to the RNase HII family. RnhC subfamily. Mn(2+) is required as a cofactor. Requires Mg(2+) as cofactor.

The protein localises to the cytoplasm. It carries out the reaction Endonucleolytic cleavage to 5'-phosphomonoester.. Endonuclease that specifically degrades the RNA of RNA-DNA hybrids. This is Ribonuclease HIII from Streptococcus thermophilus (strain CNRZ 1066).